Reading from the N-terminus, the 235-residue chain is MGKRRWSQHFLRDTSVAQFITELVPSGLDIIEVGPGRGALTLPLAEKSKTIYAIEIDPTLAEFLKRQAPPNVVVIVGDALEIEWPRADFFVSNIPYSITSPLLLKLAKYRLPAVVTIQKEVAERLVAAPGTENYGRLTVAIRCHYDVEVLRILPPHVFSPPPKVYSAVVRLTPRRPCVEDFENFQRFTARLFSTRRKTLRRLKLGETEKRVYQLTLEEIVELYKKHFDTTETCRS.

S-adenosyl-L-methionine-binding residues include His-9, Leu-11, Gly-34, Glu-55, Asp-78, and Asn-93.

The protein belongs to the class I-like SAM-binding methyltransferase superfamily. rRNA adenine N(6)-methyltransferase family. RsmA subfamily.

The protein localises to the cytoplasm. Specifically dimethylates two adjacent adenosines in the loop of a conserved hairpin near the 3'-end of 16S rRNA in the 30S particle. May play a critical role in biogenesis of 30S subunits. The chain is Probable ribosomal RNA small subunit methyltransferase A from Pyrobaculum islandicum (strain DSM 4184 / JCM 9189 / GEO3).